The sequence spans 207 residues: Guanylate kinase (207 aa).

One can recognise a Guanylate kinase-like domain in the interval 10 to 187 (GFFIVLSAAS…AVERLQVIYQ (178 aa)). 17-24 (AASGTGKT) is an ATP binding site.

The protein belongs to the guanylate kinase family.

It localises to the cytoplasm. The enzyme catalyses GMP + ATP = GDP + ADP. Its function is as follows. Essential for recycling GMP and indirectly, cGMP. This chain is Guanylate kinase, found in Syntrophus aciditrophicus (strain SB).